The following is a 502-amino-acid chain: Glutamate--tRNA ligase (502 aa).

The 'HIGH' region motif lies at 12–22 (PSPTGYLHVGG). A 'KMSKS' region motif is present at residues 259–263 (KLSKR). K262 serves as a coordination point for ATP.

This sequence belongs to the class-I aminoacyl-tRNA synthetase family. Glutamate--tRNA ligase type 1 subfamily. Monomer.

It is found in the cytoplasm. The catalysed reaction is tRNA(Glu) + L-glutamate + ATP = L-glutamyl-tRNA(Glu) + AMP + diphosphate. Functionally, catalyzes the attachment of glutamate to tRNA(Glu) in a two-step reaction: glutamate is first activated by ATP to form Glu-AMP and then transferred to the acceptor end of tRNA(Glu). The protein is Glutamate--tRNA ligase of Chlorobium phaeobacteroides (strain DSM 266 / SMG 266 / 2430).